The chain runs to 215 residues: Deoxyribose-phosphate aldolase (215 aa).

The active-site Proton donor/acceptor is the Asp90. Lys152 acts as the Schiff-base intermediate with acetaldehyde in catalysis. Residue Lys181 is the Proton donor/acceptor of the active site.

The protein belongs to the DeoC/FbaB aldolase family. DeoC type 1 subfamily.

The protein localises to the cytoplasm. The catalysed reaction is 2-deoxy-D-ribose 5-phosphate = D-glyceraldehyde 3-phosphate + acetaldehyde. The protein operates within carbohydrate degradation; 2-deoxy-D-ribose 1-phosphate degradation; D-glyceraldehyde 3-phosphate and acetaldehyde from 2-deoxy-alpha-D-ribose 1-phosphate: step 2/2. Catalyzes a reversible aldol reaction between acetaldehyde and D-glyceraldehyde 3-phosphate to generate 2-deoxy-D-ribose 5-phosphate. The polypeptide is Deoxyribose-phosphate aldolase (Ureaplasma parvum serovar 3 (strain ATCC 27815 / 27 / NCTC 11736)).